The sequence spans 712 residues: MKIQTIIQIVLISFLFLNVESKKINCLHLQQDECIKNKDKCFLSNVNSCCEKDFLMCLPISSKYCESQTDDVFSNKNILKKSPPSSSHEWCLKKKKSILRFNTSCVPELDLDSEYFKPNLYKCKYSKCQKGFKCVDEKLHKKCETENNPCCKYESKCVPSKDIDQNEAPIFKNPKGQLAQDIYNHLNPDSPQFKDKPNHENHKKDKNNKKHKKDIKNNSDKNNNNNNNNNNKKNKTINNNEPNQNQQSNPIDRTFNNETPFPWNFKNQDQQQQKQEQTQKQTQKEYFKAGSPYPVLPNLNKEPTTHLNTIEPTSFTASASRYQLEGNDNKDEENIDENNGEDKKKKKKKKKDDKSKKPKDDEKHTKKPNVTEQPADDPSIEITEEPTITPSSSPVHQDPCKKATCPNGSHCLVYGNQAYCKLDKPPNYQTMSPLPQKQQPSVKKMDSLSMFYKKSKMLLSEYTTEQRPQLTCSTIKCEDDEVCINKVGLNPYCQIKPPPKPVSYNKTSCSQCPIGSYRCNPNPNGSGVICETDAINCRLIACKEGEFCIDNIENTPPKCYPKLLCNLSKIPPDYYCISDEIRGGFYVKYESYIDLSCETLLCEGVNSYCVENGGPICKTWPNDTIQYQPSCDKCPKDTMSCTPNENSNNKGVVCRIDRPSCSVIQCPDNQYCVNTDKGPKCYKRSIECSNSRCPRDYTCKRDEIRGGACLKN.

Positions 1 to 21 are cleaved as a signal peptide; it reads MKIQTIIQIVLISFLFLNVES. Asn-102 carries an N-linked (GlcNAc...) asparagine glycan. Residues 181–400 form a disordered region; that stretch reads DIYNHLNPDS…SSSPVHQDPC (220 aa). Residues 192-203 are compositionally biased toward basic and acidic residues; it reads QFKDKPNHENHK. Residues 204–214 are compositionally biased toward basic residues; that stretch reads KDKNNKKHKKD. N-linked (GlcNAc...) asparagine glycans are attached at residues Asn-217 and Asn-234. Residues 220 to 251 are compositionally biased toward low complexity; sequence DKNNNNNNNNNNKKNKTINNNEPNQNQQSNPI. A compositionally biased stretch (polar residues) spans 254 to 269; the sequence is TFNNETPFPWNFKNQD. The segment covering 270-281 has biased composition (low complexity); it reads QQQQKQEQTQKQ. Residues 301 to 321 are compositionally biased toward polar residues; it reads KEPTTHLNTIEPTSFTASASR. Positions 330–339 are enriched in acidic residues; sequence KDEENIDENN. A compositionally biased stretch (basic and acidic residues) spans 352–364; that stretch reads DDKSKKPKDDEKH. The N-linked (GlcNAc...) asparagine glycan is linked to Asn-369. Over residues 374–384 the composition is skewed to acidic residues; it reads PADDPSIEITE. Residues 386–395 show a composition bias toward polar residues; the sequence is PTITPSSSPV. Follistatin-like domains lie at 399 to 421 and 471 to 494; these read PCKKATCPNGSHCLVYGNQAYCK and TCSTIKCEDDEVCINKVGLNPYCQ. N-linked (GlcNAc...) asparagine glycosylation occurs at Asn-407. Residues Asn-505, Asn-524, and Asn-566 are each glycosylated (N-linked (GlcNAc...) asparagine). The Follistatin-like 3 domain occupies 596–618; it reads SCETLLCEGVNSYCVENGGPICK. Asn-622 carries an N-linked (GlcNAc...) asparagine glycan. 2 Follistatin-like domains span residues 660–682 and 687–710; these read SCSVIQCPDNQYCVNTDKGPKCY and ECSNSRCPRDYTCKRDEIRGGACL.

Its subcellular location is the secreted. The polypeptide is Follistatin-like domain-containing protein DDB_G0289517 (Dictyostelium discoideum (Social amoeba)).